A 433-amino-acid polypeptide reads, in one-letter code: D-amino acid dehydrogenase (433 aa).

3-17 (VLVLGSGVIGTTSAY) contributes to the FAD binding site.

This sequence belongs to the DadA oxidoreductase family. It depends on FAD as a cofactor.

The enzyme catalyses a D-alpha-amino acid + A + H2O = a 2-oxocarboxylate + AH2 + NH4(+). In terms of biological role, oxidative deamination of D-amino acids. This Pseudomonas syringae pv. tomato (strain ATCC BAA-871 / DC3000) protein is D-amino acid dehydrogenase.